The primary structure comprises 426 residues: Protein TolB homolog (426 aa).

Residues 1–19 form the signal peptide; it reads MFLRSFLCLLCLLPSILYC.

The protein belongs to the TolB family.

It localises to the periplasm. This is Protein TolB homolog from Chlamydia muridarum (strain MoPn / Nigg).